Reading from the N-terminus, the 232-residue chain is Ornithine carbamoyltransferase (232 aa).

Residues glutamine 15, arginine 39, and 66-69 (HPTQ) each bind carbamoyl phosphate. L-ornithine is bound by residues asparagine 99, aspartate 163, and 167-168 (SM). Carbamoyl phosphate contacts are provided by residues 204-207 (HCLP) and threonine 232.

It belongs to the aspartate/ornithine carbamoyltransferase superfamily. OTCase family.

The protein localises to the cytoplasm. The enzyme catalyses carbamoyl phosphate + L-ornithine = L-citrulline + phosphate + H(+). The protein operates within amino-acid biosynthesis; L-arginine biosynthesis; L-arginine from L-ornithine and carbamoyl phosphate: step 1/3. Reversibly catalyzes the transfer of the carbamoyl group from carbamoyl phosphate (CP) to the N(epsilon) atom of ornithine (ORN) to produce L-citrulline. The polypeptide is Ornithine carbamoyltransferase (argF) (Neisseria subflava).